Consider the following 309-residue polypeptide: Probable manganese-dependent inorganic pyrophosphatase (309 aa).

Residues His9, Asp13, Asp15, Asp75, His97, and Asp149 each contribute to the Mn(2+) site.

The protein belongs to the PPase class C family. Mn(2+) serves as cofactor.

The protein resides in the cytoplasm. The enzyme catalyses diphosphate + H2O = 2 phosphate + H(+). This Bacillus cereus (strain ZK / E33L) protein is Probable manganese-dependent inorganic pyrophosphatase.